A 347-amino-acid polypeptide reads, in one-letter code: Protein RecA (347 aa).

An ATP-binding site is contributed by 66–73; it reads GPESSGKT.

This sequence belongs to the RecA family.

It is found in the cytoplasm. Can catalyze the hydrolysis of ATP in the presence of single-stranded DNA, the ATP-dependent uptake of single-stranded DNA by duplex DNA, and the ATP-dependent hybridization of homologous single-stranded DNAs. It interacts with LexA causing its activation and leading to its autocatalytic cleavage. The polypeptide is Protein RecA (Allochromatium vinosum (Chromatium vinosum)).